The following is a 146-amino-acid chain: Large ribosomal subunit protein uL15 (146 aa).

Residues 1-51 (MQLNTLKPAEGSKKNRRRVGRGIGSGLGKTAGRGHKGQKSRSGGFHKVGFE) are disordered. Residues 21-31 (RGIGSGLGKTA) are compositionally biased toward gly residues.

Belongs to the universal ribosomal protein uL15 family. In terms of assembly, part of the 50S ribosomal subunit.

Binds to the 23S rRNA. The protein is Large ribosomal subunit protein uL15 of Polynucleobacter asymbioticus (strain DSM 18221 / CIP 109841 / QLW-P1DMWA-1) (Polynucleobacter necessarius subsp. asymbioticus).